Reading from the N-terminus, the 467-residue chain is MLLLLLLLLLWGIKGVEGQNPQEVFTLNVERKVVVQEGLCVLVPCNFSYLKKRLTDWTDSDPVHGFWYREGTDRRKDSIVATNNPIRKAVKETRNRFFLLGDPWRNDCSLNIREIRKKDAGLYFFRLERGKTKYNYMWDKMTLVVTALTNTPQILLPETLEAGHPSNLTCSVPWDCGWTAPPIFSWTGTSVSFLSTNTTGSSVLTITPQPQDHGTNLTCQVTLPGTNVSTRMTIRLNVSYAPKNLTVTIYQGADSVSTILKNGSSLPISEGQSLRLICSTDSYPPANLSWSWDNLTLCPSKLSKPGLLELFPVHLKHGGVYTCQAQHALGSQHISLSLSPQSSATLSEMMMGTFVGSGVTALLFLSVCILLLAVRSYRRKPARPAVVAPHPDALKVSVSQNPLVESQADDSSEPLPSILEAAPSSTEEEIHYATLSFHEMKPMNLWGQQDTTTEYSEIKFPQRTAWP.

The signal sequence occupies residues 1–18 (MLLLLLLLLLWGIKGVEG). The Extracellular portion of the chain corresponds to 19 to 353 (QNPQEVFTLN…ATLSEMMMGT (335 aa)). Positions 21-141 (PQEVFTLNVE…TKYNYMWDKM (121 aa)) constitute an Ig-like V-type domain. Disulfide bonds link Cys40–Cys176, Cys45–Cys108, and Cys170–Cys219. N-linked (GlcNAc...) asparagine glycosylation is present at Asn46. Residue Arg126 coordinates N-acetylneuraminate. Ig-like C2-type domains are found at residues 152–239 (PQIL…LNVS) and 242–339 (PKNL…LSLS). N-linked (GlcNAc...) asparagine glycosylation is found at Asn167, Asn197, Asn216, Asn227, Asn237, Asn244, Asn262, Asn287, and Asn294. Cys278 and Cys323 are joined by a disulfide. A helical membrane pass occupies residues 354–374 (FVGSGVTALLFLSVCILLLAV). At 375–467 (RSYRRKPARP…IKFPQRTAWP (93 aa)) the chain is on the cytoplasmic side. The ITIM motif signature appears at 430 to 435 (IHYATL). Phosphotyrosine is present on residues Tyr432 and Tyr455. The SLAM-like motif signature appears at 453 to 458 (TEYSEI).

It belongs to the immunoglobulin superfamily. SIGLEC (sialic acid binding Ig-like lectin) family. In terms of assembly, homodimer; disulfide-linked. Interacts with PTPN6/SHP-1 and PTPN11/SHP-2 upon phosphorylation. Post-translationally, phosphorylation of Tyr-432 is required for binding to PTPN6 and PTPN11. Phosphorylation of Tyr-455 is involved in binding to PTPN6. Tyr-432 needs to be phosphorylated prior to Tyr-455. In terms of tissue distribution, expressed by monocytic/myeloid lineage cells. Found at higher levels in spleen, liver and heart. Found at lower levels in kidney and lung.

Its subcellular location is the membrane. Functionally, putative adhesion molecule that mediates sialic-acid dependent binding to cells. The sialic acid recognition site may be masked by cis interactions with sialic acids on the same cell surface. In the immune response, may act as an inhibitory receptor upon ligand induced tyrosine phosphorylation by recruiting cytoplasmic phosphatase(s) via their SH2 domain(s) that block signal transduction through dephosphorylation of signaling molecules. In Mus musculus (Mouse), this protein is Sialic acid-binding Ig-like lectin 12 (Siglec12).